Reading from the N-terminus, the 180-residue chain is 3-hydroxyanthranilate 3,4-dioxygenase (180 aa).

Arg44 contacts O2. The Fe cation site is built by His48, Glu54, and His92. Glu54 provides a ligand contact to substrate. Residues Arg96 and Glu106 each contribute to the substrate site. Positions 121, 124, 158, and 161 each coordinate a divalent metal cation.

The protein belongs to the 3-HAO family. The cofactor is Fe(2+).

Its subcellular location is the cytoplasm. The enzyme catalyses 3-hydroxyanthranilate + O2 = (2Z,4Z)-2-amino-3-carboxymuconate 6-semialdehyde. It functions in the pathway cofactor biosynthesis; NAD(+) biosynthesis; quinolinate from L-kynurenine: step 3/3. Functionally, catalyzes the oxidative ring opening of 3-hydroxyanthranilate to 2-amino-3-carboxymuconate semialdehyde, which spontaneously cyclizes to quinolinate. In Neurospora crassa (strain ATCC 24698 / 74-OR23-1A / CBS 708.71 / DSM 1257 / FGSC 987), this protein is 3-hydroxyanthranilate 3,4-dioxygenase (bna1).